The chain runs to 398 residues: Acetate kinase (398 aa).

Asn9 is a Mg(2+) binding site. Lys16 is a binding site for ATP. Substrate is bound at residue Arg93. Asp150 (proton donor/acceptor) is an active-site residue. ATP contacts are provided by residues His209–Gly213, Asp284–Arg286, and Gly329–His333. Residue Glu382 coordinates Mg(2+).

The protein belongs to the acetokinase family. As to quaternary structure, homodimer. The cofactor is Mg(2+). Mn(2+) is required as a cofactor.

Its subcellular location is the cytoplasm. It catalyses the reaction acetate + ATP = acetyl phosphate + ADP. Its pathway is metabolic intermediate biosynthesis; acetyl-CoA biosynthesis; acetyl-CoA from acetate: step 1/2. Functionally, catalyzes the formation of acetyl phosphate from acetate and ATP. Can also catalyze the reverse reaction. This Rhodopseudomonas palustris (strain ATCC BAA-98 / CGA009) protein is Acetate kinase.